Here is a 228-residue protein sequence, read N- to C-terminus: Cytochrome b5 domain-containing protein 1 (228 aa).

The 67-residue stretch at 17-83 (RRYFTPAEVA…DPKTRDIRKH (67 aa)) folds into the Cytochrome b5 heme-binding domain. Positions 52 and 83 each coordinate heme.

It belongs to the cytochrome b5 family.

Its subcellular location is the cytoplasm. It localises to the cytoskeleton. It is found in the cilium axoneme. In terms of biological role, radial spoke stalk protein that binds heme under oxidizing conditions. Required for the coordinated beating of multiple cilia maybe by functioning in a redox signaling pathway. The sequence is that of Cytochrome b5 domain-containing protein 1 from Homo sapiens (Human).